The chain runs to 619 residues: Dihydroxy-acid dehydratase (619 aa).

A Mg(2+)-binding site is contributed by Asp81. Residue Cys122 participates in [2Fe-2S] cluster binding. 2 residues coordinate Mg(2+): Asp123 and Lys124. At Lys124 the chain carries N6-carboxylysine. [2Fe-2S] cluster is bound at residue Cys195. Residue Glu494 coordinates Mg(2+). Ser520 (proton acceptor) is an active-site residue.

The protein belongs to the IlvD/Edd family. In terms of assembly, homodimer. The cofactor is [2Fe-2S] cluster. Requires Mg(2+) as cofactor.

It carries out the reaction (2R)-2,3-dihydroxy-3-methylbutanoate = 3-methyl-2-oxobutanoate + H2O. The catalysed reaction is (2R,3R)-2,3-dihydroxy-3-methylpentanoate = (S)-3-methyl-2-oxopentanoate + H2O. It functions in the pathway amino-acid biosynthesis; L-isoleucine biosynthesis; L-isoleucine from 2-oxobutanoate: step 3/4. It participates in amino-acid biosynthesis; L-valine biosynthesis; L-valine from pyruvate: step 3/4. Functions in the biosynthesis of branched-chain amino acids. Catalyzes the dehydration of (2R,3R)-2,3-dihydroxy-3-methylpentanoate (2,3-dihydroxy-3-methylvalerate) into 2-oxo-3-methylpentanoate (2-oxo-3-methylvalerate) and of (2R)-2,3-dihydroxy-3-methylbutanoate (2,3-dihydroxyisovalerate) into 2-oxo-3-methylbutanoate (2-oxoisovalerate), the penultimate precursor to L-isoleucine and L-valine, respectively. The polypeptide is Dihydroxy-acid dehydratase (Shewanella sp. (strain ANA-3)).